A 238-amino-acid polypeptide reads, in one-letter code: Uridylate kinase (238 aa).

12–15 (KLSG) provides a ligand contact to ATP. Gly-54 lines the UMP pocket. Gly-55 and Arg-59 together coordinate ATP. UMP contacts are provided by residues Asp-74 and 135-142 (TGNPYFTT). ATP contacts are provided by Thr-162, Asn-163, Tyr-168, and Asp-171.

It belongs to the UMP kinase family. In terms of assembly, homohexamer.

It is found in the cytoplasm. It catalyses the reaction UMP + ATP = UDP + ADP. The protein operates within pyrimidine metabolism; CTP biosynthesis via de novo pathway; UDP from UMP (UMPK route): step 1/1. Its activity is regulated as follows. Inhibited by UTP. Catalyzes the reversible phosphorylation of UMP to UDP. The polypeptide is Uridylate kinase (Bradyrhizobium sp. (strain BTAi1 / ATCC BAA-1182)).